Consider the following 421-residue polypeptide: Tubulin gamma-3 chain (421 aa).

94–100 (AGGTGSG) lines the GTP pocket.

The protein belongs to the tubulin family.

It localises to the cytoplasm. The protein resides in the cytoskeleton. It is found in the microtubule organizing center. In terms of biological role, tubulin is the major constituent of microtubules. The gamma chain is found at microtubule organizing centers (MTOC) such as the spindle poles, suggesting that it is involved in the minus-end nucleation of microtubule assembly. This chain is Tubulin gamma-3 chain (TUBG3), found in Zea mays (Maize).